The chain runs to 282 residues: ATP synthase gamma chain (282 aa).

Belongs to the ATPase gamma chain family. In terms of assembly, F-type ATPases have 2 components, CF(1) - the catalytic core - and CF(0) - the membrane proton channel. CF(1) has five subunits: alpha(3), beta(3), gamma(1), delta(1), epsilon(1). CF(0) has three main subunits: a, b and c. In this bacterium the a and b subunits are transcribed but do not seem to be translated, thus the ATP synthase consists of the alpha, beta, gamma, delta, epsilon and c subunits.

It localises to the cell membrane. In terms of biological role, produces ATP from ADP in the presence of a proton gradient across the membrane. The gamma chain is believed to be important in regulating ATPase activity and the flow of protons through the CF(0) complex. The polypeptide is ATP synthase gamma chain (Moorella thermoacetica (strain ATCC 39073 / JCM 9320)).